Reading from the N-terminus, the 89-residue chain is MAISTELKAEIVKDYQRAEGDTGSPEVQVALLTARINDLTPHFKANTKDHHSRRGLLKMVSRRRKLLDYLKRTDAEAYRALITRLGLRK.

It belongs to the universal ribosomal protein uS15 family. Part of the 30S ribosomal subunit. Forms a bridge to the 50S subunit in the 70S ribosome, contacting the 23S rRNA.

One of the primary rRNA binding proteins, it binds directly to 16S rRNA where it helps nucleate assembly of the platform of the 30S subunit by binding and bridging several RNA helices of the 16S rRNA. Its function is as follows. Forms an intersubunit bridge (bridge B4) with the 23S rRNA of the 50S subunit in the ribosome. The sequence is that of Small ribosomal subunit protein uS15 from Laribacter hongkongensis (strain HLHK9).